Reading from the N-terminus, the 426-residue chain is Glutamate-1-semialdehyde 2,1-aminomutase (426 aa).

N6-(pyridoxal phosphate)lysine is present on lysine 265.

The protein belongs to the class-III pyridoxal-phosphate-dependent aminotransferase family. HemL subfamily. As to quaternary structure, homodimer. Pyridoxal 5'-phosphate is required as a cofactor.

The protein localises to the cytoplasm. The enzyme catalyses (S)-4-amino-5-oxopentanoate = 5-aminolevulinate. It functions in the pathway porphyrin-containing compound metabolism; protoporphyrin-IX biosynthesis; 5-aminolevulinate from L-glutamyl-tRNA(Glu): step 2/2. This Salmonella arizonae (strain ATCC BAA-731 / CDC346-86 / RSK2980) protein is Glutamate-1-semialdehyde 2,1-aminomutase.